The sequence spans 277 residues: Ubiquinone biosynthesis protein COQ4, mitochondrial (277 aa).

Residues 1 to 14 (MLTKRALRTTDPYR) constitute a mitochondrion transit peptide. The Zn(2+) site is built by His157, Asp158, His161, and Glu173.

This sequence belongs to the COQ4 family. In terms of assembly, component of a multi-subunit COQ enzyme complex, composed of at least COQ3, COQ4, COQ5, COQ6, COQ7 and COQ9. Zn(2+) serves as cofactor.

The protein localises to the mitochondrion inner membrane. It catalyses the reaction a 4-hydroxy-3-methoxy-5-(all-trans-polyprenyl)benzoate + H(+) = a 2-methoxy-6-(all-trans-polyprenyl)phenol + CO2. It participates in cofactor biosynthesis; ubiquinone biosynthesis. Lyase that catalyzes the C1-decarboxylation of 4-hydroxy-3-methoxy-5-(all-trans-polyprenyl)benzoic acid into 2-methoxy-6-(all-trans-polyprenyl)phenol during ubiquinone biosynthesis. The protein is Ubiquinone biosynthesis protein COQ4, mitochondrial of Ajellomyces capsulatus (strain NAm1 / WU24) (Darling's disease fungus).